The following is a 174-amino-acid chain: Glutamyl-tRNA(Gln) amidotransferase subunit F, mitochondrial (174 aa).

It belongs to the GatF family. In terms of assembly, subunit of the heterotrimeric GatFAB amidotransferase (AdT) complex, composed of A, B and F subunits.

It is found in the mitochondrion inner membrane. It catalyses the reaction L-glutamyl-tRNA(Gln) + L-glutamine + ATP + H2O = L-glutaminyl-tRNA(Gln) + L-glutamate + ADP + phosphate + H(+). Allows the formation of correctly charged Gln-tRNA(Gln) through the transamidation of misacylated Glu-tRNA(Gln) in the mitochondria. The reaction takes place in the presence of glutamine and ATP through an activated gamma-phospho-Glu-tRNA(Gln). Required for proper protein synthesis within the mitochondrion. In Kluyveromyces lactis (strain ATCC 8585 / CBS 2359 / DSM 70799 / NBRC 1267 / NRRL Y-1140 / WM37) (Yeast), this protein is Glutamyl-tRNA(Gln) amidotransferase subunit F, mitochondrial.